Consider the following 868-residue polypeptide: Leucine--tRNA ligase (868 aa).

The 'HIGH' region motif lies at 42–52 (PYPSGKLHMGH). Positions 627–631 (KMSKS) match the 'KMSKS' region motif. Lys630 contacts ATP.

Belongs to the class-I aminoacyl-tRNA synthetase family.

The protein localises to the cytoplasm. It catalyses the reaction tRNA(Leu) + L-leucine + ATP = L-leucyl-tRNA(Leu) + AMP + diphosphate. In Pseudomonas syringae pv. syringae (strain B728a), this protein is Leucine--tRNA ligase.